The sequence spans 278 residues: Diaminopimelate epimerase (278 aa).

The substrate site is built by asparagine 11 and asparagine 63. The Proton donor role is filled by cysteine 72. Residues 73-74 (GN), asparagine 160, asparagine 193, and 211-212 (ER) each bind substrate. Residue cysteine 220 is the Proton acceptor of the active site. 221-222 (GT) lines the substrate pocket.

This sequence belongs to the diaminopimelate epimerase family. Homodimer.

It is found in the cytoplasm. It carries out the reaction (2S,6S)-2,6-diaminopimelate = meso-2,6-diaminopimelate. It functions in the pathway amino-acid biosynthesis; L-lysine biosynthesis via DAP pathway; DL-2,6-diaminopimelate from LL-2,6-diaminopimelate: step 1/1. In terms of biological role, catalyzes the stereoinversion of LL-2,6-diaminopimelate (L,L-DAP) to meso-diaminopimelate (meso-DAP), a precursor of L-lysine and an essential component of the bacterial peptidoglycan. This is Diaminopimelate epimerase from Desulforudis audaxviator (strain MP104C).